We begin with the raw amino-acid sequence, 179 residues long: ATP synthase subunit delta (179 aa).

This sequence belongs to the ATPase delta chain family. In terms of assembly, F-type ATPases have 2 components, F(1) - the catalytic core - and F(0) - the membrane proton channel. F(1) has five subunits: alpha(3), beta(3), gamma(1), delta(1), epsilon(1). F(0) has three main subunits: a(1), b(2) and c(10-14). The alpha and beta chains form an alternating ring which encloses part of the gamma chain. F(1) is attached to F(0) by a central stalk formed by the gamma and epsilon chains, while a peripheral stalk is formed by the delta and b chains.

The protein localises to the cell inner membrane. Its function is as follows. F(1)F(0) ATP synthase produces ATP from ADP in the presence of a proton or sodium gradient. F-type ATPases consist of two structural domains, F(1) containing the extramembraneous catalytic core and F(0) containing the membrane proton channel, linked together by a central stalk and a peripheral stalk. During catalysis, ATP synthesis in the catalytic domain of F(1) is coupled via a rotary mechanism of the central stalk subunits to proton translocation. Functionally, this protein is part of the stalk that links CF(0) to CF(1). It either transmits conformational changes from CF(0) to CF(1) or is implicated in proton conduction. The protein is ATP synthase subunit delta of Paraburkholderia phymatum (strain DSM 17167 / CIP 108236 / LMG 21445 / STM815) (Burkholderia phymatum).